The chain runs to 658 residues: MPRIAALPDHLVNQIAAGEVVERPANALKEIVENSIDAGATAIDVELDGGGIRLIRVSDNGSGIHPDDIELALHRHATSKIKTLNDLEHVASMGFRGEGLASIASVSRLTLTSRQEDSSHATQVKAEDGKLSSPTAAAHPVGTTIEAAELFFNTPARRKFLKSENTEYAHCATMIERLALAHPHIAFSLKRDGKQVFKLPAQSLHERIAAIVGDDFQTASLEIDSGSGALRLYGAIAKPTFAKGKTDKQYCFVNHRFVRDKVMLHAVKQAYRDVLHNALTPAFVLFLDLPPEAVDVNVHPTKTEIRFRDSRQVHQLVFHTLNKALADTRADLTESVSNAGEVLHDITGVTPAPMPSENDSENLFNRASDYPTGNKPDTRNAFGSSGKTAPMPYQSAYAPQQRSLSLRESRAAMNTYAELYKKTDDIDLELSQFEQARFGNMPSETPAPKTDTPLSDGIPSQSELPPLGFAIAQLLGIYILAQAEDSLLLIDMHAAAERVNYEKMKRQRQENGRLQSQRLLIPITFAASHEECAALADYAETLAGFGLELSDMGGNTLAVRAVPTMLGKADVVSLARDVLGELAQVGSSQTIEEHENHILATMSCHGSVRAGRQLTLPEMNALLRDMENTPRSNQCNHGRPTWVKLTLKELDALFLRGQ.

The segment covering 114 to 130 (RQEDSSHATQVKAEDGK) has biased composition (basic and acidic residues). Disordered stretches follow at residues 114–137 (RQED…PTAA), 369–401 (DYPT…APQQ), and 438–457 (FGNM…LSDG).

This sequence belongs to the DNA mismatch repair MutL/HexB family.

In terms of biological role, this protein is involved in the repair of mismatches in DNA. It is required for dam-dependent methyl-directed DNA mismatch repair. May act as a 'molecular matchmaker', a protein that promotes the formation of a stable complex between two or more DNA-binding proteins in an ATP-dependent manner without itself being part of a final effector complex. The sequence is that of DNA mismatch repair protein MutL from Neisseria meningitidis serogroup A / serotype 4A (strain DSM 15465 / Z2491).